The chain runs to 180 residues: NAD(P)H-quinone oxidoreductase subunit I, chloroplastic (180 aa).

4Fe-4S ferredoxin-type domains are found at residues 55–84 (GRIH…VDWR) and 95–124 (LNYS…MTEE). Cys64, Cys67, Cys70, Cys74, Cys104, Cys107, Cys110, and Cys114 together coordinate [4Fe-4S] cluster.

Belongs to the complex I 23 kDa subunit family. As to quaternary structure, NDH is composed of at least 16 different subunits, 5 of which are encoded in the nucleus. [4Fe-4S] cluster is required as a cofactor.

The protein localises to the plastid. It is found in the chloroplast thylakoid membrane. The enzyme catalyses a plastoquinone + NADH + (n+1) H(+)(in) = a plastoquinol + NAD(+) + n H(+)(out). It carries out the reaction a plastoquinone + NADPH + (n+1) H(+)(in) = a plastoquinol + NADP(+) + n H(+)(out). Its function is as follows. NDH shuttles electrons from NAD(P)H:plastoquinone, via FMN and iron-sulfur (Fe-S) centers, to quinones in the photosynthetic chain and possibly in a chloroplast respiratory chain. The immediate electron acceptor for the enzyme in this species is believed to be plastoquinone. Couples the redox reaction to proton translocation, and thus conserves the redox energy in a proton gradient. The chain is NAD(P)H-quinone oxidoreductase subunit I, chloroplastic from Amborella trichopoda.